The following is a 1097-amino-acid chain: uncharacterized protein (1097 aa).

The stretch at 31-1087 forms a coiled coil; it reads LLNVARQEEE…TALNKLRTRH (1057 aa).

It belongs to the TRAFAC class myosin-kinesin ATPase superfamily. Myosin family. In terms of tissue distribution, specifically expressed in muscles of the head including temporalis and tensor veli palatini.

Its function is as follows. Has most probably lost the function in masticatory muscles contraction suspected for its homologs in dog (AC F1PT61) and apes. This is an uncharacterized protein from Homo sapiens (Human).